Here is a 511-residue protein sequence, read N- to C-terminus: Probable cytochrome P450 4ac2 (511 aa).

Positions 318 and 455 each coordinate heme.

It belongs to the cytochrome P450 family. The cofactor is heme.

It localises to the endoplasmic reticulum membrane. The protein localises to the microsome membrane. Its function is as follows. May be involved in the metabolism of insect hormones and in the breakdown of synthetic insecticides. This Drosophila melanogaster (Fruit fly) protein is Probable cytochrome P450 4ac2 (Cyp4ac2).